Reading from the N-terminus, the 104-residue chain is Protein P3 (104 aa).

The chain crosses the membrane as a helical span at residues 77–99 (LVFGVPQKTLLLGFGGLLVLGLV).

As to quaternary structure, homodimer.

The protein localises to the virion membrane. The sequence is that of Protein P3 (III) from Pseudoalteromonas phage PM2 (Bacteriophage PM2).